The following is a 392-amino-acid chain: Putative RNA-binding protein Luc7-like 2 (392 aa).

A Phosphoserine modification is found at Ser18. Residues 102–177 (EVAKKRLAET…EAEEVYRNSM (76 aa)) adopt a coiled-coil conformation. Residues 235-257 (KQEKRNQERLKRREEREREEREK) are compositionally biased toward basic and acidic residues. A disordered region spans residues 235 to 392 (KQEKRNQERL…SSEEREAGEI (158 aa)). Residues 258-321 (LRRSRSHSKN…RSRSHQRSRH (64 aa)) are compositionally biased toward basic residues. 2 positions are modified to 5-hydroxylysine; by JMJD6: Lys266 and Lys269. Basic and acidic residues-rich tracts occupy residues 337-364 (KERFRDQDLASCDRDRSSRDRSPRDRDR) and 377-392 (RSEDRRSSEEREAGEI).

The protein belongs to the Luc7 family. In terms of assembly, interacts with SCNM1.

It is found in the nucleus speckle. The protein resides in the nucleus. Its subcellular location is the nucleoplasm. In terms of biological role, may bind to RNA via its Arg/Ser-rich domain. The chain is Putative RNA-binding protein Luc7-like 2 (LUC7L2) from Homo sapiens (Human).